The sequence spans 759 residues: Forkhead box protein M1 (759 aa).

Positions 1–92 (MRTSPRRPLI…MRLPSNPPQS (92 aa)) are disordered. Residues 48-63 (LAHELEDMAPKSKADQ) are compositionally biased toward basic and acidic residues. The segment at residues 260 to 358 (RPPYSYMALI…KTASPMSPAD (99 aa)) is a DNA-binding region (fork-head). Disordered regions lie at residues 420 to 450 (AESS…KHLG), 516 to 535 (SANP…PSNV), and 596 to 631 (KEHF…RDPV). The span at 601-612 (KPTTSSTPSKPT) shows a compositional bias: low complexity.

Localized to the animal hemisphere of early cleavage stage embryos. During neurulation, expressed in the neural folds. Later, expressed in the spinal cord and in the eye field. During tailbud stages, expression is still restricted to the neuroectoderm, predominantly to the hindbrain, the eye and the spinal cord. With ongoing development, expression is also found at lower levels in the branchial arches. At stage 35, expressed in the rhombencephalon and in the eye retina.

Its subcellular location is the nucleus. Transcription factor regulating the expression of cell cycle genes essential for DNA replication and mitosis. Plays a role in the control of cell proliferation. Also plays a role in DNA break repair, participating in the DNA damage checkpoint response. Promotes transcription of PHB2. In Xenopus laevis (African clawed frog), this protein is Forkhead box protein M1.